The primary structure comprises 160 residues: Cytochrome b6-f complex subunit 4 (160 aa).

Helical transmembrane passes span 36-56 (LLYI…GLSV), 95-115 (LLGV…PFIE), and 131-151 (TVFL…ALPI).

It belongs to the cytochrome b family. PetD subfamily. As to quaternary structure, the 4 large subunits of the cytochrome b6-f complex are cytochrome b6, subunit IV (17 kDa polypeptide, petD), cytochrome f and the Rieske protein, while the 4 small subunits are petG, petL, petM and petN. The complex functions as a dimer.

Its subcellular location is the plastid. It is found in the chloroplast thylakoid membrane. Its function is as follows. Component of the cytochrome b6-f complex, which mediates electron transfer between photosystem II (PSII) and photosystem I (PSI), cyclic electron flow around PSI, and state transitions. The polypeptide is Cytochrome b6-f complex subunit 4 (Chaetosphaeridium globosum (Charophycean green alga)).